A 341-amino-acid polypeptide reads, in one-letter code: Alpha-ketoglutarate-dependent dioxygenase oryG (341 aa).

H100 provides a ligand contact to substrate. Fe cation is bound by residues H140 and D142. Position 167 (T167) interacts with 2-oxoglutarate. H299 contributes to the Fe cation binding site. 2-oxoglutarate contacts are provided by R311 and R315. A substrate-binding site is contributed by R315.

Belongs to the TfdA dioxygenase family. The cofactor is Fe(2+).

It functions in the pathway secondary metabolite biosynthesis. Functionally, alpha-ketoglutarate-dependent dioxygenase; part of the gene cluster that mediates the biosynthesis of oryzines, natural products with an unusual maleidride backbone. The two subunits of the fungal fatty acid synthase oryfasA and oryfasB probably form octenoic acid. This fatty acid is most likely activated by the acyl-CoA ligase oryP to give octenyl-CoA before the citrate synthase-like protein oryE catalyzes condensation with oxaloacetate to form tricarboxylic acid. The next steps of the pathways are conjectural, but a favorite possible route has been proposed, beginning with decarboxylation and concomitant dehydration by the decarboxylase oryM, followed by tautomerization, which may lead to the production of a diene intermediate. Reduction of this diene intermediate could give the known metabolite piliformic acid. On the pathway to oryzine B and oryzine A, however, hydroxylation of the diene by the alpha-ketoglutarate-dependent dioxygenase oryG and lactonisation by the lactonohydrolases oryH or oryL could give oryzine B directly. Finally, enoyl reduction by the dehydrogenase oryD would then convert oryzine B into oryzine A. This Aspergillus oryzae (strain ATCC 42149 / RIB 40) (Yellow koji mold) protein is Alpha-ketoglutarate-dependent dioxygenase oryG.